The sequence spans 306 residues: Serine/threonine-protein phosphatase PP2A-2 catalytic subunit (306 aa).

The Mn(2+) site is built by Asp54, His56, Asp82, and Asn114. The active-site Proton donor is the His115. Residues His164 and His238 each coordinate Mn(2+). Residue Leu306 is modified to Leucine methyl ester.

The protein belongs to the PPP phosphatase family. PP-2A subfamily. In terms of assembly, PP2A consists of a common heterodimeric core enzyme, composed of a 36 kDa catalytic subunit (subunit C) and a 65 kDa constant regulatory subunit (subunit A), that associates with a variety of regulatory subunits such as subunits B (the R2/B/PR55/B55, R3/B''/PR72/PR130/PR59 and R5/B'/B56 families). Interacts with B'THETA. Interacts with HDA14. Interacts with SRK2E/OST1. Interacts with TAP46. It depends on Mn(2+) as a cofactor. Reversibly methyl esterified on Leu-306 by leucine carboxyl methyltransferase 1 (LCMT1) and pectin methylesterase 1 (PME1). Carboxyl methylation influences the affinity of the catalytic subunit for the different regulatory subunits, thereby modulating the PP2A holoenzyme's substrate specificity, enzyme activity and cellular localization. Post-translationally, phosphorylation of either threonine (by autophosphorylation-activated protein kinase) or tyrosine results in inactivation of the phosphatase. Auto-dephosphorylation has been suggested as a mechanism for reactivation. In terms of tissue distribution, expressed in root meristem, emerging lateral roots, leaf vasculature, stipules, guard cells, anthers and pollen grains.

The protein localises to the cytoplasm. It localises to the cytosol. The protein resides in the nucleus. It is found in the peroxisome. The catalysed reaction is O-phospho-L-seryl-[protein] + H2O = L-seryl-[protein] + phosphate. The enzyme catalyses O-phospho-L-threonyl-[protein] + H2O = L-threonyl-[protein] + phosphate. Functionally, dephosphorylates and activates the actin-depolymerizing factor ADF1, which, in turn, regulates actin cytoskeleton remodeling and is involved in the blue light photoreceptor PHOT2-mediated chloroplast avoidance movements. Associates with the serine/threonine-protein phosphatase PP2A regulatory subunits A and B' to positively regulates beta-oxidation of fatty acids and protoauxins in peroxisomes by dephosphorylating peroxisomal beta-oxidation-related proteins. Acts as a negative regulator of abscisic acid (ABA) signaling. May regulate ABA-dependent gene expression. Involved in the light-dependent activation of nitrate reductase. The protein is Serine/threonine-protein phosphatase PP2A-2 catalytic subunit of Arabidopsis thaliana (Mouse-ear cress).